The chain runs to 77 residues: Metallothionein-like protein 2 (77 aa).

This sequence belongs to the metallothionein superfamily. Type 15 family.

Metallothioneins have a high content of cysteine residues that bind various heavy metals. The protein is Metallothionein-like protein 2 (MT1A) of Trifolium repens (Creeping white clover).